A 119-amino-acid polypeptide reads, in one-letter code: Large ribosomal subunit protein bL20c (119 aa).

The protein belongs to the bacterial ribosomal protein bL20 family.

The protein localises to the plastid. It localises to the chloroplast. Its function is as follows. Binds directly to 23S ribosomal RNA and is necessary for the in vitro assembly process of the 50S ribosomal subunit. It is not involved in the protein synthesizing functions of that subunit. This chain is Large ribosomal subunit protein bL20c, found in Nandina domestica (Heavenly bamboo).